The chain runs to 294 residues: Cytidine deaminase (294 aa).

2 CMP/dCMP-type deaminase domains span residues 48 to 168 and 186 to 294; these read DEDA…FGPK and LTGD…VLLA. Substrate is bound at residue 89–91; that stretch reads NME. A Zn(2+)-binding site is contributed by His102. Glu104 functions as the Proton donor in the catalytic mechanism. Zn(2+)-binding residues include Cys129 and Cys132.

The protein belongs to the cytidine and deoxycytidylate deaminase family. Homodimer. Requires Zn(2+) as cofactor.

The catalysed reaction is cytidine + H2O + H(+) = uridine + NH4(+). It catalyses the reaction 2'-deoxycytidine + H2O + H(+) = 2'-deoxyuridine + NH4(+). In terms of biological role, this enzyme scavenges exogenous and endogenous cytidine and 2'-deoxycytidine for UMP synthesis. This Escherichia coli O17:K52:H18 (strain UMN026 / ExPEC) protein is Cytidine deaminase.